A 155-amino-acid polypeptide reads, in one-letter code: MAPK regulated corepressor interacting protein 2 (155 aa).

The residue at position 1 (methionine 1) is an N-acetylmethionine. Residues 1–59 form a disordered region; that stretch reads MYTITKGPSKLVAQRRTGPTQQQVESRLGELLKCRHSAPTPQHPRAQPPGPWPLSSPGP. Residue arginine 35 is modified to Omega-N-methylarginine. Residues 46–56 are compositionally biased toward pro residues; sequence AQPPGPWPLSS. Serine 56 is subject to Phosphoserine. Arginine 60 carries the post-translational modification Omega-N-methylarginine. Serine 77 is subject to Phosphoserine.

It belongs to the MCRIP family. Interacts with DDX6. Interacts with MCRIP1.

Its subcellular location is the cytoplasm. The protein localises to the stress granule. The protein resides in the nucleus. This Bos taurus (Bovine) protein is MAPK regulated corepressor interacting protein 2 (MCRIP2).